The sequence spans 440 residues: MFLAQEIIRKKRDGHALSDEEIRFFINGIRDNTISEGQIAALAMTIFFHDMTMPERVSLTMAMRDSGTVLDWKSLNLNGPIVDKHSTGGVGDVTSLMLGPMVAACGGYVPMISGRGLGHTGGTLDKLEAIPGFDIFPDDNRFREIIQDVGVAIIGQTSSLAPADKRFYATRDITATVDSIPLITGSILAKKLAEGLDALVMDVKVGSGAFMPTYELSEALAEAIVGVANGAGVRTTALLTDMNQVLASSAGNAVEVREAVQFLTGEYRNPRLFDVTMALCVEMLISGQLAKDDAEARAKLQAVLDNGKAAEVFGRMVAAQKGPSDFVENYDKYLPTAMLSKAVYADTEGFISAMDTRALGMAVVSMGGGRRQASDTIDYSVGFTDMARLGDSIDGQRPLAVIHAKDEASWQEAAKAVKAAIILDDKAPASTPSVYRRITE.

This sequence belongs to the thymidine/pyrimidine-nucleoside phosphorylase family. In terms of assembly, homodimer.

It carries out the reaction thymidine + phosphate = 2-deoxy-alpha-D-ribose 1-phosphate + thymine. Its pathway is pyrimidine metabolism; dTMP biosynthesis via salvage pathway; dTMP from thymine: step 1/2. In terms of biological role, the enzymes which catalyze the reversible phosphorolysis of pyrimidine nucleosides are involved in the degradation of these compounds and in their utilization as carbon and energy sources, or in the rescue of pyrimidine bases for nucleotide synthesis. The sequence is that of Thymidine phosphorylase from Salmonella dublin (strain CT_02021853).